The following is a 188-amino-acid chain: MILPINIYSDDILRLKAKPLKGVDSAIEELIASMFESMRNASGIGLAAPQVGRSIRLLVLDVSCVSKCEHEKPMVVINPHILSVRGHNDMEEGCLSVPGVQGYVVRPAAITLKYRDEHFAERTGEFSGMVARVIQHEIDHLDGTLFVDRMEKRDRKKIQKELTALASGIVDTEYPVVEREVVPIAKPT.

C94 and H136 together coordinate Fe cation. E137 is an active-site residue. A Fe cation-binding site is contributed by H140.

It belongs to the polypeptide deformylase family. Fe(2+) serves as cofactor.

It carries out the reaction N-terminal N-formyl-L-methionyl-[peptide] + H2O = N-terminal L-methionyl-[peptide] + formate. In terms of biological role, removes the formyl group from the N-terminal Met of newly synthesized proteins. Requires at least a dipeptide for an efficient rate of reaction. N-terminal L-methionine is a prerequisite for activity but the enzyme has broad specificity at other positions. The protein is Peptide deformylase of Pelodictyon phaeoclathratiforme (strain DSM 5477 / BU-1).